We begin with the raw amino-acid sequence, 1171 residues long: ATP-dependent helicase/deoxyribonuclease subunit B (1171 aa).

The 343-residue stretch at 1–343 (MSLRFVIGRA…LVAEENYRYR (343 aa)) folds into the UvrD-like helicase ATP-binding domain. ATP is bound at residue 8–15 (GRAGSGKS). Residues 281-587 (MEQPRFHSPA…QFANIPPSLD (307 aa)) form the UvrD-like helicase C-terminal domain. 4 residues coordinate [4Fe-4S] cluster: C805, C1129, C1132, and C1138.

This sequence belongs to the helicase family. AddB/RexB type 1 subfamily. As to quaternary structure, heterodimer of AddA and AddB. Requires Mg(2+) as cofactor. [4Fe-4S] cluster serves as cofactor.

The heterodimer acts as both an ATP-dependent DNA helicase and an ATP-dependent, dual-direction single-stranded exonuclease. Recognizes the chi site generating a DNA molecule suitable for the initiation of homologous recombination. The AddB subunit has 5' -&gt; 3' nuclease activity but not helicase activity. This chain is ATP-dependent helicase/deoxyribonuclease subunit B, found in Bacillus anthracis.